The primary structure comprises 67 residues: Large ribosomal subunit protein bL35 (67 aa).

It belongs to the bacterial ribosomal protein bL35 family.

This Gloeothece citriformis (strain PCC 7424) (Cyanothece sp. (strain PCC 7424)) protein is Large ribosomal subunit protein bL35.